The following is a 368-amino-acid chain: Phospho-N-acetylmuramoyl-pentapeptide-transferase (368 aa).

9 helical membrane-spanning segments follow: residues 30-50 (AAAI…IRFL), 72-92 (VPTM…LLWA), 98-118 (HVWL…IDDY), 139-159 (VALG…SVLL), 170-190 (FSVD…TAVS), 201-221 (GLAA…AYLG), 238-258 (AGEI…FLWF), 262-284 (PAEV…VIAL), and 345-365 (KIVI…LMTL).

This sequence belongs to the glycosyltransferase 4 family. MraY subfamily. The cofactor is Mg(2+).

It is found in the cell inner membrane. It catalyses the reaction UDP-N-acetyl-alpha-D-muramoyl-L-alanyl-gamma-D-glutamyl-meso-2,6-diaminopimeloyl-D-alanyl-D-alanine + di-trans,octa-cis-undecaprenyl phosphate = di-trans,octa-cis-undecaprenyl diphospho-N-acetyl-alpha-D-muramoyl-L-alanyl-D-glutamyl-meso-2,6-diaminopimeloyl-D-alanyl-D-alanine + UMP. The protein operates within cell wall biogenesis; peptidoglycan biosynthesis. Its function is as follows. Catalyzes the initial step of the lipid cycle reactions in the biosynthesis of the cell wall peptidoglycan: transfers peptidoglycan precursor phospho-MurNAc-pentapeptide from UDP-MurNAc-pentapeptide onto the lipid carrier undecaprenyl phosphate, yielding undecaprenyl-pyrophosphoryl-MurNAc-pentapeptide, known as lipid I. The polypeptide is Phospho-N-acetylmuramoyl-pentapeptide-transferase (Chlorobaculum parvum (strain DSM 263 / NCIMB 8327) (Chlorobium vibrioforme subsp. thiosulfatophilum)).